The chain runs to 1083 residues: MDKSSKPTIRLLFATKGCAISHSLLLLTGQISTEPLYVVSYTWTPDLDDVFVKNGREEITQVIPTKRPREVTENDEENQIMHLFCSRDVNVIFYLIGGFSTGDVRSRVWPIFFCCFKTQTDFKALYKALWYGAPLNPHIISDTLCISETFDIHSEVIQTLMVTTHHLNRKGLSDNGLCITEATLCKLVKKSVGRQELTSLYAHYERQVLAAYRRLYWGYGCSPFWYIVRFGPSEKTLVLATRYYLLQTDTSYNTLETPLYDLQAIKDLFLTYQVPALPNCSGYNISDLLSFDKLSMFCCSSTYTRGLTAKNALSYILQRIHTDTTEIHAVSEYITNDRKGLKVPDREFVDYIYLAHFECFNRKQIADHLQAVTYSDFVNKPVLLKSSNLGKRATANFFNHVRSRLNMRDYIKKNVICDVTELGPEIGHKYTITKTYTLSLTYAAKPSKFIGVCDLATTLTRRVENIEKQFSPYGWSSTIPSNPPGFDELSNFEDSVVSAEALRAANFANDTPNQSGRTGFDTSPGITKLLLFFSAATGIATHDVSILSYKTPLEALIGHSEVTGPMPVYRVALPQGAQAFAVIANDTWSSITNRYTLPHEARLIAEDLKQINPCNFVAASLRDMQLTLLLSTSVKNVSKISSNIPKDQLYINRNELFNTNLIITNLILDVDFHIRKPIPLGILHAGMRAFRHGILTAMQLLFPKAVVNPNKDPCYFYKTACPEPTVEVLDDDNLLDITSHSDIDFYIENGELYTCVEENYTEDVWFFDTQTTSEVHTHADVSNNENLHETLPCNCKEKIGFRVCVPIPNPYALVGSSTLKGFAQILQQAVLLEREFVEYIGPYLRDFSFIDTGVYSHGHSLRLPFFSKVTTTGTAVGQLLPFYVVPEQCIDILAFVTSHRNPANFHFHSRPQSNVPVQFILHNLGGEYAEFFERKVARNKQIFSPPQISLTKALKERGVTCLDAFTLEAFVDSTILESIVEHIAVHFPGRDREYTLTSSKCIAIKRDWVLFQLICGTKGFTCLRYPHRGGRTAPRTFVSLRVDHHNRLCISLAQQCFATKCDSNRMHTIFTLEVPNYPNLTSS.

The CHC2-type zinc-finger motif lies at 1022 to 1061 (CLRYPHRGGRTAPRTFVSLRVDHHNRLCISLAQQCFATKC).

The protein belongs to the herpesviridae DNA primase family. In terms of assembly, associates with the helicase and the primase-associated factor to form the helicase-primase factor.

Its subcellular location is the host nucleus. Its function is as follows. Essential component of the helicase/primase complex. Unwinds the DNA at the replication forks and generates single-stranded DNA for both leading and lagging strand synthesis. The primase initiates primer synthesis and thereby produces large amount of short RNA primers on the lagging strand that the polymerase elongates using dNTPs. The chain is DNA primase from Varicella-zoster virus (strain Oka vaccine) (HHV-3).